We begin with the raw amino-acid sequence, 175 residues long: MSINIRDPLIVSRVVGDVLDPFNRSITLKVTYGQREVTNGLDLRPSQVQNKPRVEIGGEDLRNFYTLVMVDPDVPSPSNPHLREYLHWLVTDIPATTGTTFGNEIVCYENPSPTAGIHRVVFILFRQLGRQTVYAPGWRQNFNTREFAEIYNLGLPVAAVFYNCQRESGCGGRRL.

Belongs to the phosphatidylethanolamine-binding protein family. In terms of assembly, interacts with FD/BZIP14 and FDP/BZIP27. Interacts with FTIP1/MCTP1 in phloem companion cells. Interacts with NAKR1. As to expression, mostly localized in leaves vasculature.

It localises to the cytoplasm. It is found in the nucleus. Its subcellular location is the endoplasmic reticulum. Functionally, component of the mobile flower-promoting signal (floral stimulus or florigen). Promotes the transition from vegetative growth to flowering. Required for 'SEPALLATA3' (SEP3) and 'FRUITFULL' (FUL) accumulation in mature rosette leaves. Seems to acts in parallel with 'LEAFY' to induce flowering by regulating 'APETALA1'. Translated in leaves and then transported to the shoot apical meristem where it activates the transcription of several floral meristem identity genes. May play a role in both the autonomous and the long-day flowering pathways. The sequence is that of Protein FLOWERING LOCUS T from Arabidopsis thaliana (Mouse-ear cress).